The sequence spans 1103 residues: DNA polymerase delta catalytic subunit (1103 aa).

The interval 1 to 29 is disordered; sequence MDFKRRQGPGPGVPPKRARGGLWDEDEPS. The Nuclear localization signal signature appears at 4-19; that stretch reads KRRQGPGPGVPPKRAR. Residue Arg-19 is modified to Omega-N-methylarginine. Lys-570 participates in a covalent cross-link: Glycyl lysine isopeptide (Lys-Gly) (interchain with G-Cter in SUMO2). Zn(2+) is bound by residues Cys-1008, Cys-1011, Cys-1022, and Cys-1025. The CysA-type zinc-finger motif lies at 1008-1025; it reads CIGCRSVINHQGAVCEFC. Residues Cys-1054, Cys-1057, Cys-1067, and Cys-1072 each coordinate [4Fe-4S] cluster. The CysB motif motif lies at 1054 to 1072; sequence CQRCQGSLHEDVICTSRDC.

The protein belongs to the DNA polymerase type-B family. In terms of assembly, component of the tetrameric DNA polymerase delta complex (Pol-delta4), which consists of POLD1/p125, POLD2/p50, POLD3/p66/p68 and POLD4/p12, with POLD1 bearing both DNA polymerase and 3' to 5' proofreading exonuclease activities. Within Pol-delta4, directly interacts with POLD2 and POLD4. Following genotoxic stress by DNA-damaging agents, such as ultraviolet light and methyl methanesulfonate, or by replication stress induced by treatment with hydroxyurea or aphidicolin, Pol-delta4 is converted into a trimeric form of the complex (Pol-delta3) by POLD4 degradation. Pol-delta3 is the major form at S phase replication sites and DNA damage sites. POLD1 displays different catalytic properties depending upon the complex it is found in. It exhibits higher proofreading activity and fidelity than Pol-delta4, making it particularly well suited to respond to DNA damage. Directly interacts with PCNA, as do POLD3 and POLD4; this interaction stimulates Pol-delta4 polymerase activity. As POLD2 and POLD4, directly interacts with WRNIP1; this interaction stimulates DNA polymerase delta-mediated DNA synthesis, independently of the presence of PCNA. This stimulation may be due predominantly to an increase of initiation frequency and also to increased processivity. Also observed as a dimeric complex with POLD2 (Pol-delta2). Pol-delta2 is relatively insensitive to the PCNA stimulation (2-5-fold) compared to Pol-delta4 that is stimulated by over 50-fold. The DNA polymerase delta complex interacts with POLDIP2; this interaction is probably mediated through direct binding to POLD2. Interacts with CIAO1. Interacts with POLDIP2. Interacts with RFC1. [4Fe-4S] cluster is required as a cofactor.

It localises to the nucleus. The enzyme catalyses DNA(n) + a 2'-deoxyribonucleoside 5'-triphosphate = DNA(n+1) + diphosphate. With respect to regulation, regulated by alteration of quaternary structure. Exhibits burst rates of DNA synthesis are about 5 times faster in the presence of POLD4 (Pol-delta4 complex) than in its absence (Pol-delta3 complex), while the affinity of the enzyme for its DNA and dNTP substrates appears unchanged. The Pol-delta3 complex is more likely to proofread DNA synthesis because it cleaves single-stranded DNA twice as fast and transfers mismatched DNA from the polymerase to the exonuclease sites 9 times faster compared to the Pol-delta3 complex. Pol-delta3 also extends mismatched primers 3 times more slowly in the absence of POLD4. The conversion of Pol-delta4 into Pol-delta3 is induced by genotoxic stress or by replication stress leading POLD4 degradation. Stimulated in the presence of PCNA. This stimulation is further increased in the presence of KCTD13/PDIP1, most probably via direct interaction between KCTD13 and POLD2. Functionally, as the catalytic component of the trimeric (Pol-delta3 complex) and tetrameric DNA polymerase delta complexes (Pol-delta4 complex), plays a crucial role in high fidelity genome replication, including in lagging strand synthesis, and repair. Exhibits both DNA polymerase and 3'- to 5'-exonuclease activities. Requires the presence of accessory proteins POLD2, POLD3 and POLD4 for full activity. Depending upon the absence (Pol-delta3) or the presence of POLD4 (Pol-delta4), displays differences in catalytic activity. Most notably, expresses higher proofreading activity in the context of Pol-delta3 compared with that of Pol-delta4. Although both Pol-delta3 and Pol-delta4 process Okazaki fragments in vitro, Pol-delta3 may be better suited to fulfill this task, exhibiting near-absence of strand displacement activity compared to Pol-delta4 and stalling on encounter with the 5'-blocking oligonucleotides. Pol-delta3 idling process may avoid the formation of a gap, while maintaining a nick that can be readily ligated. Along with DNA polymerase kappa, DNA polymerase delta carries out approximately half of nucleotide excision repair (NER) synthesis following UV irradiation. Under conditions of DNA replication stress, in the presence of POLD3 and POLD4, may catalyze the repair of broken replication forks through break-induced replication (BIR). Involved in the translesion synthesis (TLS) of templates carrying O6-methylguanine, 8oxoG or abasic sites. In Mesocricetus auratus (Golden hamster), this protein is DNA polymerase delta catalytic subunit (POLD1).